We begin with the raw amino-acid sequence, 122 residues long: uncharacterized protein (122 aa).

An N-terminal signal peptide occupies residues 1 to 20 (MGFHFCIWIIFLLPPPCKKC).

It localises to the secreted. This is an uncharacterized protein from Homo sapiens (Human).